We begin with the raw amino-acid sequence, 295 residues long: ATP synthase gamma chain (295 aa).

This sequence belongs to the ATPase gamma chain family. As to quaternary structure, F-type ATPases have 2 components, CF(1) - the catalytic core - and CF(0) - the membrane proton channel. CF(1) has five subunits: alpha(3), beta(3), gamma(1), delta(1), epsilon(1). CF(0) has three main subunits: a, b and c.

Its subcellular location is the cell inner membrane. Produces ATP from ADP in the presence of a proton gradient across the membrane. The gamma chain is believed to be important in regulating ATPase activity and the flow of protons through the CF(0) complex. In Maricaulis maris (strain MCS10) (Caulobacter maris), this protein is ATP synthase gamma chain.